The primary structure comprises 333 residues: Adenosine deaminase (333 aa).

2 residues coordinate Zn(2+): H12 and H14. Residues H14, D16, and G170 each coordinate substrate. Position 197 (H197) interacts with Zn(2+). The Proton donor role is filled by E200. D278 lines the Zn(2+) pocket. D279 is a substrate binding site.

It belongs to the metallo-dependent hydrolases superfamily. Adenosine and AMP deaminases family. Adenosine deaminase subfamily. Zn(2+) is required as a cofactor.

It catalyses the reaction adenosine + H2O + H(+) = inosine + NH4(+). The catalysed reaction is 2'-deoxyadenosine + H2O + H(+) = 2'-deoxyinosine + NH4(+). Catalyzes the hydrolytic deamination of adenosine and 2-deoxyadenosine. This chain is Adenosine deaminase, found in Escherichia coli O157:H7.